Reading from the N-terminus, the 423-residue chain is Alpha-1-antichymotrypsin (423 aa).

Residues methionine 1–cysteine 23 form the signal peptide. N-linked (GlcNAc...) asparagine glycosylation is found at asparagine 33, asparagine 93, asparagine 106, asparagine 127, and asparagine 186. Residues lysine 235 to lysine 237 mediate DNA binding. Residue asparagine 271 is glycosylated (N-linked (GlcNAc...) asparagine). The segment at glycine 369–arginine 394 is RCL. The segment at threonine 381–threonine 389 is O-glycosylated at one site.

This sequence belongs to the serpin family. As to quaternary structure, interacts with DNAJC1. In terms of processing, N- and O-glycosylated. In terms of tissue distribution, plasma. Synthesized in the liver. Like the related alpha-1-antitrypsin, its concentration increases in the acute phase of inflammation or infection. Found in the amyloid plaques from the hippocampus of Alzheimer disease brains.

It is found in the secreted. In terms of biological role, although its physiological function is unclear, it can inhibit neutrophil cathepsin G and mast cell chymase, both of which can convert angiotensin-1 to the active angiotensin-2. The polypeptide is Alpha-1-antichymotrypsin (SERPINA3) (Homo sapiens (Human)).